The sequence spans 398 residues: Cholinephosphotransferase 1 (398 aa).

An N-acetylalanine modification is found at Ala2. Topologically, residues 2 to 62 (AAGAGARPAP…LLQWIPLWIA (61 aa)) are cytoplasmic. A helical membrane pass occupies residues 63-83 (PNTITLFGLAINLFTTLVLIF). Asn64 is a CDP-choline binding site. Over 84-93 (YCPTVTEEAP) the chain is Lumenal. A helical membrane pass occupies residues 94–118 (YWTYLLCALGLFIYQSLDAIDGKQA). The Mg(2+) site is built by Asp111 and Asp114. Arg119 contacts CDP-choline. Residues 119–125 (RRTNSCS) are Cytoplasmic-facing. The helical transmembrane segment at 126–150 (PLGELFDHGCDSLSTVFMAIGASIA) threads the bilayer. Residue Asp132 coordinates Mg(2+). The Proton acceptor role is filled by His133. Asp136 lines the Mg(2+) pocket. At 151-160 (VRLGTHPDWL) the chain is on the lumenal side. The helical transmembrane segment at 161–179 (FFCSFVGMFMFYCAHWQTY) threads the bilayer. Topologically, residues 180-190 (VSGVLRFGRVD) are cytoplasmic. The chain crosses the membrane as a helical span at residues 191-207 (VTEIQVALVIVFLLSTF). At 208–222 (GGAMMWDYTIPILEI) the chain is on the lumenal side. The chain crosses the membrane as a helical span at residues 223–248 (KLKILPVLGVVGGLIFSCSNYFHVIL). Residues 249–265 (HGGVGKNGSTIAGTSVL) lie on the Cytoplasmic side of the membrane. The helical transmembrane segment at 266–281 (SPGLHIGLIIILAIMI) threads the bilayer. Topologically, residues 282-293 (YKKSATNVFEKH) are lumenal. A helical transmembrane segment spans residues 294 to 316 (PCLYTLMFGCVFAKVAQKLVIAH). The Cytoplasmic portion of the chain corresponds to 317–329 (MTKSELYLQDTVF). Residues 330–339 (IGPGLLFLDQ) form a helical membrane-spanning segment. Topologically, residues 340–346 (YFNNFID) are lumenal. Residues 347–376 (EYVVLWIAMVITSFDMMIYFSSLCLQISRH) traverse the membrane as a helical segment. Residues 377–398 (LHLSIFKTSYQQAPEQVHKHID) are Cytoplasmic-facing.

The protein belongs to the CDP-alcohol phosphatidyltransferase class-I family. The cofactor is Mg(2+). Requires Mn(2+) as cofactor.

It is found in the golgi apparatus membrane. It catalyses the reaction CDP-choline + a 1,2-diacyl-sn-glycerol = a 1,2-diacyl-sn-glycero-3-phosphocholine + CMP + H(+). The catalysed reaction is 1-octadecanoyl-2-(5Z,8Z,11Z,14Z-eicosatetraenoyl)-sn-glycerol + CDP-choline = 1-octadecanoyl-2-(5Z,8Z,11Z,14Z-eicosatetraenoyl)-sn-glycero-3-phosphocholine + CMP + H(+). The enzyme catalyses 1-hexadecanoyl-2-(9Z-octadecenoyl)-sn-glycerol + CDP-choline = 1-hexadecanoyl-2-(9Z-octadecenoyl)-sn-glycero-3-phosphocholine + CMP + H(+). It carries out the reaction 1-hexadecanoyl-2-(4Z,7Z,10Z,13Z,16Z,19Z-docosahexaenoyl)-sn-glycerol + CDP-choline = 1-hexadecanoyl-2-(4Z,7Z,10Z,13Z,16Z,19Z-docosahexaenoyl)-sn-glycero-3-phosphocholine + CMP + H(+). It catalyses the reaction 1,2-dioctanoyl-sn-glycerol + CDP-choline = 1,2-dioctanoyl-sn-glycero-3-phosphocholine + CMP + H(+). It functions in the pathway phospholipid metabolism; phosphatidylcholine biosynthesis; phosphatidylcholine from phosphocholine: step 2/2. Functionally, catalyzes the final step of de novo phosphatidylcholine (PC) synthesis, i.e. the transfer of choline phosphate from CDP-choline to the free hydroxyl of a diacylglycerol (DAG), producing a PC. It thereby plays a central role in the formation and maintenance of vesicular membranes. This Rattus norvegicus (Rat) protein is Cholinephosphotransferase 1.